A 121-amino-acid chain; its full sequence is Large ribosomal subunit protein uL24 (121 aa).

The protein belongs to the universal ribosomal protein uL24 family. Part of the 50S ribosomal subunit.

In terms of biological role, one of two assembly initiator proteins, it binds directly to the 5'-end of the 23S rRNA, where it nucleates assembly of the 50S subunit. Located at the polypeptide exit tunnel on the outside of the subunit. The protein is Large ribosomal subunit protein uL24 of Pyrococcus furiosus (strain ATCC 43587 / DSM 3638 / JCM 8422 / Vc1).